The following is an 80-amino-acid chain: UPF0512 protein J (80 aa).

This sequence belongs to the UPF0512 family.

This chain is UPF0512 protein J, found in Dictyostelium discoideum (Social amoeba).